A 608-amino-acid chain; its full sequence is MNPVDQPPPPPLTQQPEEQAKEDHDDGDERLFRDPLTTYEYLDDCRDDEEFCHQFLRAYLTPIRNRQEAVRAGLLCRTPEDLAAAGGQKRKTPAPKHPKHAMVYIRRSCLVHSACATAHGKYDIRGLTLESDLAVWAALRGVPLPPDPQHFRWLNAGAFRRLVHEAQYLPEISRAAKRIALAVATGQYVVCTLLDYKTFGTRTHYLRQLCSMTEELYLRLDGTLCLFLEPEERELIGRCLPAALCRGLPVKYRTHRAAVFFHATFMARAEAALKDLYAAFCECGDGRDDGGNHNGNYGGGDHSSLSPSAVASHHSRLEHAELRLERNRHLGAFHLPAIRHLTAGDVARVQDSVSRDLGFADWSQTLVDDYFLLPAGWACANPRRGYAMYLASNAVLALRIIRLLRASIRHEYTACIRMLSGDVQRLIRLFKGEAALLRKGLAQNPVQRRELSRFRKHVHDLKRIRFTEDTFVETFCDFLELVQRIPDYRSVSLRIKRELLCLHVFKLRRGCRAPPTPEAVRVQRLLWHSLRHGDAPQDRTRLPQFSSALSDAELSNHANRCRRKAPLELGPAVVAAPGPSVRYRAHIQKFERLHVRRFRPHEVGGHAT.

Over residues 1-13 (MNPVDQPPPPPLT) the composition is skewed to pro residues. Residues 1-33 (MNPVDQPPPPPLTQQPEEQAKEDHDDGDERLFR) are disordered. Residues 18–33 (EQAKEDHDDGDERLFR) show a composition bias toward basic and acidic residues.

Belongs to the herpesviridae U4 family. In terms of assembly, interacts with host KAT5, PSME3 and EP400.

Its subcellular location is the host nucleus. The protein localises to the host nucleolus. Its function is as follows. Promotes a cell cycle arrest in G0/G1 by inducing the proteasomal degradation of host histone acetyltransferase KAT5/Tip60. In Homo sapiens (Human), this protein is Protein UL27 (UL27).